A 448-amino-acid polypeptide reads, in one-letter code: Exodeoxyribonuclease 7 large subunit (448 aa).

It belongs to the XseA family. In terms of assembly, heterooligomer composed of large and small subunits.

It is found in the cytoplasm. It catalyses the reaction Exonucleolytic cleavage in either 5'- to 3'- or 3'- to 5'-direction to yield nucleoside 5'-phosphates.. Functionally, bidirectionally degrades single-stranded DNA into large acid-insoluble oligonucleotides, which are then degraded further into small acid-soluble oligonucleotides. In Photobacterium profundum (strain SS9), this protein is Exodeoxyribonuclease 7 large subunit.